Reading from the N-terminus, the 154-residue chain is Protein X (154 aa).

Residues 68–117 are mitochondrial targeting sequence; that stretch reads PCALRFTSARRMETTVNAHRNLPKVLHKRTLGLSAMSTTDLEAHFKDCVF.

It belongs to the orthohepadnavirus protein X family. In terms of assembly, may form homodimer. May interact with host CEBPA, CFLAR, CREB1, DDB1, E4F1, HBXIP, HSPD1/HSP60, NFKBIA, POLR2E and SMAD4. Interacts with host SMC5-SMC6 complex and induces its degradation. Interacts with host TRPC4AP; leading to prevent ubiquitination of TRPC4AP. Interacts with host PLSCR1; this interaction promotes ubiquitination and degradation of HBx and impairs HBx-mediated cell proliferation. In terms of processing, a fraction may be phosphorylated in insect cells and HepG2 cells, a human hepatoblastoma cell line. Phosphorylated in vitro by host protein kinase C or mitogen-activated protein kinase. N-acetylated in insect cells.

Its subcellular location is the host cytoplasm. The protein resides in the host nucleus. The protein localises to the host mitochondrion. In terms of biological role, multifunctional protein that plays a role in silencing host antiviral defenses and promoting viral transcription. Does not seem to be essential for HBV infection. May be directly involved in development of cirrhosis and liver cancer (hepatocellular carcinoma). Most of cytosolic activities involve modulation of cytosolic calcium. The effect on apoptosis is controversial depending on the cell types in which the studies have been conducted. May induce apoptosis by localizing in mitochondria and causing loss of mitochondrial membrane potential. May also modulate apoptosis by binding host CFLAR, a key regulator of the death-inducing signaling complex (DISC). Promotes viral transcription by using the host E3 ubiquitin ligase DDB1 to target the SMC5-SMC6 complex to proteasomal degradation. This host complex would otherwise bind to viral episomal DNA, and prevents its transcription. Moderately stimulates transcription of many different viral and cellular transcription elements. Promoters and enhancers stimulated by HBx contain DNA binding sites for NF-kappa-B, AP-1, AP-2, c-EBP, ATF/CREB, or the calcium-activated factor NF-AT. This is Protein X from Hepatitis B virus genotype B2 (isolate Indonesia/pIDW420/1988) (HBV-B).